A 160-amino-acid chain; its full sequence is Serine-protein kinase RsbW (160 aa).

This sequence belongs to the anti-sigma-factor family.

It carries out the reaction L-seryl-[protein] + ATP = O-phospho-L-seryl-[protein] + ADP + H(+). The enzyme catalyses L-threonyl-[protein] + ATP = O-phospho-L-threonyl-[protein] + ADP + H(+). Functionally, negative regulator of sigma-B activity. Phosphorylates and inactivates its specific antagonist protein, RsbV. Upon phosphorylation of RsbV, RsbW is released and binds to sigma-B, thereby blocking its ability to form an RNA polymerase holoenzyme (E-sigma-B). The protein is Serine-protein kinase RsbW of Bacillus cereus (strain ZK / E33L).